The chain runs to 415 residues: MAEYCTYEKYVFKKQLETLKSKNGRSTELISLYIPPDKQISDVTKHLREEHEQASNIISKLIRNNVQEALHSLLAKLRSLHKIPENGIVYFTGTVDTGANRTGMVNEVLFPPEPVADYIYRCDSVFYLEPLEEMLRECTTYGLLLLDLREATIGMLVGRQTEVIKHLHSTVPGKQRKGGQSAHRFEQLRRIAIHDFYKRIGDATSEAFLELDPAELKGILIGGHSPTKEEFNEGGFLHYELQKKVLGLFDTGYTDESGFSELINAAEETLQSIDLLKQKKDMEIFFKEIATESGKISYGEDNVRANLEIKAVDVLLLSEELRAERVTLKCRVCGYENKRTRKWKTGEAVPAIGHCPECDSELEVTDVIDTVGELSELADKGDARIAFISTDFDEGSQLMIAFGGIAAILRYNTGV.

Belongs to the eukaryotic release factor 1 family. In terms of assembly, heterodimer of two subunits, one of which binds GTP.

Its subcellular location is the cytoplasm. In terms of biological role, directs the termination of nascent peptide synthesis (translation) in response to the termination codons UAA, UAG and UGA. The chain is Peptide chain release factor subunit 1-2 from Methanosarcina acetivorans (strain ATCC 35395 / DSM 2834 / JCM 12185 / C2A).